Consider the following 498-residue polypeptide: Probable cytosol aminopeptidase (498 aa).

Positions 267 and 272 each coordinate Mn(2+). K279 is an active-site residue. 3 residues coordinate Mn(2+): D290, D349, and E351. R353 is a catalytic residue.

This sequence belongs to the peptidase M17 family. It depends on Mn(2+) as a cofactor.

The protein localises to the cytoplasm. The catalysed reaction is Release of an N-terminal amino acid, Xaa-|-Yaa-, in which Xaa is preferably Leu, but may be other amino acids including Pro although not Arg or Lys, and Yaa may be Pro. Amino acid amides and methyl esters are also readily hydrolyzed, but rates on arylamides are exceedingly low.. It carries out the reaction Release of an N-terminal amino acid, preferentially leucine, but not glutamic or aspartic acids.. Its function is as follows. Presumably involved in the processing and regular turnover of intracellular proteins. Catalyzes the removal of unsubstituted N-terminal amino acids from various peptides. The protein is Probable cytosol aminopeptidase of Dechloromonas aromatica (strain RCB).